The primary structure comprises 396 residues: L-lactate dehydrogenase (396 aa).

The region spanning 1–380 (MIISAASDYR…TQDSLVQVLG (380 aa)) is the FMN hydroxy acid dehydrogenase domain. Residue Tyr-24 participates in substrate binding. 2 residues coordinate FMN: Ser-106 and Gln-127. Tyr-129 is a binding site for substrate. Residue Thr-155 participates in FMN binding. Arg-164 lines the substrate pocket. An FMN-binding site is contributed by Lys-251. His-275 serves as the catalytic Proton acceptor. Arg-278 contacts substrate. 306 to 330 (DSGIRNGLDVVRMIALGADTVLLGR) serves as a coordination point for FMN.

Belongs to the FMN-dependent alpha-hydroxy acid dehydrogenase family. The cofactor is FMN.

Its subcellular location is the cell inner membrane. It catalyses the reaction (S)-lactate + A = pyruvate + AH2. Its function is as follows. Catalyzes the conversion of L-lactate to pyruvate. Is coupled to the respiratory chain. This is L-lactate dehydrogenase from Escherichia coli O45:K1 (strain S88 / ExPEC).